Consider the following 452-residue polypeptide: UDP-N-acetylmuramate--L-alanine ligase (452 aa).

Residue 119–125 (GAHGKTS) coordinates ATP.

Belongs to the MurCDEF family.

Its subcellular location is the cytoplasm. The enzyme catalyses UDP-N-acetyl-alpha-D-muramate + L-alanine + ATP = UDP-N-acetyl-alpha-D-muramoyl-L-alanine + ADP + phosphate + H(+). It participates in cell wall biogenesis; peptidoglycan biosynthesis. Cell wall formation. This chain is UDP-N-acetylmuramate--L-alanine ligase, found in Streptococcus mutans serotype c (strain ATCC 700610 / UA159).